A 416-amino-acid chain; its full sequence is NADH-quinone oxidoreductase subunit H (416 aa).

9 helical membrane passes run 16–36, 84–104, 124–144, 165–185, 197–217, 260–280, 288–308, 320–340, and 353–373; these read LILAKAVGVFVFLVLTVLAAI, PVYLLAPVISVIPAFLAFAVI, LAVAVLYILAVTSVGVYGIVL, VVSYEIAMALSFATVFLYAGT, STWYVFLLLPSFLVYVTSMVG, VSALATTMFLGGWHAPWPISL, WWPLLWFTAKVWVFLFVYIWL, FMAIGWKMLIPVSLAWIMIVA, and WASGLLIAGTVLTFGLAVVLW.

Belongs to the complex I subunit 1 family. In terms of assembly, NDH-1 is composed of 14 different subunits. Subunits NuoA, H, J, K, L, M, N constitute the membrane sector of the complex.

Its subcellular location is the cell membrane. The catalysed reaction is a quinone + NADH + 5 H(+)(in) = a quinol + NAD(+) + 4 H(+)(out). In terms of biological role, NDH-1 shuttles electrons from NADH, via FMN and iron-sulfur (Fe-S) centers, to quinones in the respiratory chain. The immediate electron acceptor for the enzyme in this species is believed to be menaquinone. Couples the redox reaction to proton translocation (for every two electrons transferred, four hydrogen ions are translocated across the cytoplasmic membrane), and thus conserves the redox energy in a proton gradient. This subunit may bind ubiquinone. This is NADH-quinone oxidoreductase subunit H from Mycobacterium sp. (strain JLS).